We begin with the raw amino-acid sequence, 312 residues long: Molybdenum cofactor biosynthesis bifunctional protein (312 aa).

The tract at residues 1 to 155 is molybdenum cofactor biosynthesis protein C; sequence MEFTHLDENG…GGKSSAAEYH (155 aa). Residues 74–76 and 110–111 contribute to the substrate site; these read LCH and ME. Residue Asp125 is part of the active site. The molybdenum cofactor biosynthesis protein B stretch occupies residues 156-312; that stretch reads PRTAILVMSD…FPMLKGDGHA (157 aa).

The protein in the N-terminal section; belongs to the MoaC family. It in the C-terminal section; belongs to the MoaB/Mog family.

It catalyses the reaction (8S)-3',8-cyclo-7,8-dihydroguanosine 5'-triphosphate = cyclic pyranopterin phosphate + diphosphate. The protein operates within cofactor biosynthesis; molybdopterin biosynthesis. Catalyzes the conversion of (8S)-3',8-cyclo-7,8-dihydroguanosine 5'-triphosphate to cyclic pyranopterin monophosphate (cPMP). This Chlorobaculum tepidum (strain ATCC 49652 / DSM 12025 / NBRC 103806 / TLS) (Chlorobium tepidum) protein is Molybdenum cofactor biosynthesis bifunctional protein (moaCB).